A 114-amino-acid polypeptide reads, in one-letter code: MWSMCWVLRAHLGLLFWVAVIELCAASGPATIMASDCCENSLSSARLPPDKLICGWYWTSTVYCRQKAVIFVTHSGRKVCGSPAKRRTRLLMEKHTEIPLAKRVALRAGKGLCP.

The signal sequence occupies residues Met1 to Ala26.

Its function is as follows. Acts as a highly selective agonist for human lymphoactin receptor XCR1. The chain is Protein vCCL3 (K4.1) from Human herpesvirus 8 type P (isolate GK18) (HHV-8).